The sequence spans 432 residues: Eukaryotic translation initiation factor 3 subunit E (432 aa).

The region spanning 221 to 401 (VYYNYPKGRD…MGVKSVSIHE (181 aa)) is the PCI domain.

Belongs to the eIF-3 subunit E family. Component of the eukaryotic translation initiation factor 3 (eIF-3) complex.

Its subcellular location is the cytoplasm. Its function is as follows. Component of the eukaryotic translation initiation factor 3 (eIF-3) complex, which is involved in protein synthesis of a specialized repertoire of mRNAs and, together with other initiation factors, stimulates binding of mRNA and methionyl-tRNAi to the 40S ribosome. The eIF-3 complex specifically targets and initiates translation of a subset of mRNAs involved in cell proliferation. In Caenorhabditis elegans, this protein is Eukaryotic translation initiation factor 3 subunit E.